A 187-amino-acid chain; its full sequence is Large ribosomal subunit protein uL5 (187 aa).

This sequence belongs to the universal ribosomal protein uL5 family. In terms of assembly, part of the 50S ribosomal subunit; part of the 5S rRNA/L5/L18/L25 subcomplex. Contacts the 5S rRNA and the P site tRNA. Forms a bridge to the 30S subunit in the 70S ribosome.

Its function is as follows. This is one of the proteins that bind and probably mediate the attachment of the 5S RNA into the large ribosomal subunit, where it forms part of the central protuberance. In the 70S ribosome it contacts protein S13 of the 30S subunit (bridge B1b), connecting the 2 subunits; this bridge is implicated in subunit movement. Contacts the P site tRNA; the 5S rRNA and some of its associated proteins might help stabilize positioning of ribosome-bound tRNAs. The polypeptide is Large ribosomal subunit protein uL5 (Saccharopolyspora erythraea (strain ATCC 11635 / DSM 40517 / JCM 4748 / NBRC 13426 / NCIMB 8594 / NRRL 2338)).